The primary structure comprises 357 residues: Beta-hexosaminidase (357 aa).

Residues aspartate 66, arginine 74, arginine 140, and 170 to 171 (KH) each bind substrate. The Proton donor/acceptor role is filled by histidine 183. Aspartate 254 serves as the catalytic Nucleophile.

This sequence belongs to the glycosyl hydrolase 3 family. NagZ subfamily.

The protein localises to the cytoplasm. It catalyses the reaction Hydrolysis of terminal non-reducing N-acetyl-D-hexosamine residues in N-acetyl-beta-D-hexosaminides.. The protein operates within cell wall biogenesis; peptidoglycan recycling. Functionally, plays a role in peptidoglycan recycling by cleaving the terminal beta-1,4-linked N-acetylglucosamine (GlcNAc) from peptide-linked peptidoglycan fragments, giving rise to free GlcNAc, anhydro-N-acetylmuramic acid and anhydro-N-acetylmuramic acid-linked peptides. In Chromobacterium violaceum (strain ATCC 12472 / DSM 30191 / JCM 1249 / CCUG 213 / NBRC 12614 / NCIMB 9131 / NCTC 9757 / MK), this protein is Beta-hexosaminidase.